Reading from the N-terminus, the 449-residue chain is Ribosomal protein uS12 methylthiotransferase RimO (449 aa).

The MTTase N-terminal domain maps to 16–126 (PKISFVSLGC…VMEAVHAAIA (111 aa)). [4Fe-4S] cluster-binding residues include Cys-25, Cys-61, Cys-90, Cys-157, Cys-161, and Cys-164. In terms of domain architecture, Radical SAM core spans 143 to 381 (LTPRHYAYLK…MEHQQKISAR (239 aa)). Residues 384–449 (REKIGKHVSV…DAYDLHGKAV (66 aa)) form the TRAM domain.

Belongs to the methylthiotransferase family. RimO subfamily. [4Fe-4S] cluster serves as cofactor.

It localises to the cytoplasm. The catalysed reaction is L-aspartate(89)-[ribosomal protein uS12]-hydrogen + (sulfur carrier)-SH + AH2 + 2 S-adenosyl-L-methionine = 3-methylsulfanyl-L-aspartate(89)-[ribosomal protein uS12]-hydrogen + (sulfur carrier)-H + 5'-deoxyadenosine + L-methionine + A + S-adenosyl-L-homocysteine + 2 H(+). Its function is as follows. Catalyzes the methylthiolation of an aspartic acid residue of ribosomal protein uS12. In Beijerinckia indica subsp. indica (strain ATCC 9039 / DSM 1715 / NCIMB 8712), this protein is Ribosomal protein uS12 methylthiotransferase RimO.